Here is a 294-residue protein sequence, read N- to C-terminus: 4-hydroxy-tetrahydrodipicolinate synthase (294 aa).

Thr45 serves as a coordination point for pyruvate. The active-site Proton donor/acceptor is the Tyr133. Lys162 (schiff-base intermediate with substrate) is an active-site residue. Val204 contributes to the pyruvate binding site.

It belongs to the DapA family. Homotetramer; dimer of dimers.

The protein localises to the cytoplasm. It catalyses the reaction L-aspartate 4-semialdehyde + pyruvate = (2S,4S)-4-hydroxy-2,3,4,5-tetrahydrodipicolinate + H2O + H(+). It participates in amino-acid biosynthesis; L-lysine biosynthesis via DAP pathway; (S)-tetrahydrodipicolinate from L-aspartate: step 3/4. Catalyzes the condensation of (S)-aspartate-beta-semialdehyde [(S)-ASA] and pyruvate to 4-hydroxy-tetrahydrodipicolinate (HTPA). The polypeptide is 4-hydroxy-tetrahydrodipicolinate synthase (Bartonella bacilliformis (strain ATCC 35685 / KC583 / Herrer 020/F12,63)).